The chain runs to 658 residues: Protein translocase subunit SecA 3 (658 aa).

ATP is bound by residues Gln111, Gly129–Thr133, and Asp536.

This sequence belongs to the SecA family. As to quaternary structure, monomer and homodimer. Part of the essential Sec protein translocation apparatus which comprises SecA, SecYEG and auxiliary proteins SecDF-YajC and YidC.

The protein resides in the cell inner membrane. It is found in the cytoplasm. It catalyses the reaction ATP + H2O + cellular proteinSide 1 = ADP + phosphate + cellular proteinSide 2.. In terms of biological role, part of the Sec protein translocase complex. Interacts with the SecYEG preprotein conducting channel. Has a central role in coupling the hydrolysis of ATP to the transfer of proteins into and across the cell membrane, serving both as a receptor for the preprotein-SecB complex and as an ATP-driven molecular motor driving the stepwise translocation of polypeptide chains across the membrane. This Magnetococcus marinus (strain ATCC BAA-1437 / JCM 17883 / MC-1) protein is Protein translocase subunit SecA 3.